The primary structure comprises 138 residues: Cystatin-11 (138 aa).

The first 26 residues, 1–26, serve as a signal peptide directing secretion; it reads MMAEPWQALQLLLAILLTLMALPYQA. 2 disulfide bridges follow: C94-C102 and C115-C135. N132 carries N-linked (GlcNAc...) asparagine glycosylation.

This sequence belongs to the cystatin family. In terms of tissue distribution, detected in the epithelium and lumen of the epididymis, and in sperm (at protein level).

It localises to the secreted. Its function is as follows. Has antibacterial activity against the Gram-negative bacteria E.coli. May play a role in sperm maturation and fertilization. This Homo sapiens (Human) protein is Cystatin-11 (CST11).